A 128-amino-acid polypeptide reads, in one-letter code: Large ribosomal subunit protein bL17 (128 aa).

This sequence belongs to the bacterial ribosomal protein bL17 family. As to quaternary structure, part of the 50S ribosomal subunit. Contacts protein L32.

This chain is Large ribosomal subunit protein bL17, found in Enterobacter sp. (strain 638).